A 178-amino-acid polypeptide reads, in one-letter code: DNA-directed RNA polymerase subunit beta (178 aa).

The protein belongs to the RNA polymerase beta chain family. In terms of assembly, the RNAP catalytic core consists of 2 alpha, 1 beta, 1 beta' and 1 omega subunit. When a sigma factor is associated with the core the holoenzyme is formed, which can initiate transcription.

It catalyses the reaction RNA(n) + a ribonucleoside 5'-triphosphate = RNA(n+1) + diphosphate. In terms of biological role, DNA-dependent RNA polymerase catalyzes the transcription of DNA into RNA using the four ribonucleoside triphosphates as substrates. The chain is DNA-directed RNA polymerase subunit beta (rpoB) from Liberibacter asiaticus (Citrus greening disease).